A 133-amino-acid chain; its full sequence is Large ribosomal subunit protein bL21 (133 aa).

Residues 1–22 (MAEKPAAKPKAAAAKAEAKDQS) form a disordered region.

The protein belongs to the bacterial ribosomal protein bL21 family. As to quaternary structure, part of the 50S ribosomal subunit. Contacts protein L20.

This protein binds to 23S rRNA in the presence of protein L20. The protein is Large ribosomal subunit protein bL21 of Prochlorococcus marinus (strain MIT 9303).